A 323-amino-acid chain; its full sequence is Methionyl-tRNA formyltransferase (323 aa).

A (6S)-5,6,7,8-tetrahydrofolate-binding site is contributed by 113-116; that stretch reads SLLP.

Belongs to the Fmt family.

The catalysed reaction is L-methionyl-tRNA(fMet) + (6R)-10-formyltetrahydrofolate = N-formyl-L-methionyl-tRNA(fMet) + (6S)-5,6,7,8-tetrahydrofolate + H(+). In terms of biological role, attaches a formyl group to the free amino group of methionyl-tRNA(fMet). The formyl group appears to play a dual role in the initiator identity of N-formylmethionyl-tRNA by promoting its recognition by IF2 and preventing the misappropriation of this tRNA by the elongation apparatus. The chain is Methionyl-tRNA formyltransferase from Porphyromonas gingivalis (strain ATCC 33277 / DSM 20709 / CIP 103683 / JCM 12257 / NCTC 11834 / 2561).